The sequence spans 183 residues: Bifunctional protein PyrR (183 aa).

The PRPP-binding motif lies at 102 to 114 (VVLVDDVLFSGRT).

This sequence belongs to the purine/pyrimidine phosphoribosyltransferase family. PyrR subfamily.

The catalysed reaction is UMP + diphosphate = 5-phospho-alpha-D-ribose 1-diphosphate + uracil. Regulates the transcription of the pyrimidine nucleotide (pyr) operon in response to exogenous pyrimidines. Functionally, also displays a weak uracil phosphoribosyltransferase activity which is not physiologically significant. This chain is Bifunctional protein PyrR, found in Leifsonia xyli subsp. xyli (strain CTCB07).